The following is a 545-amino-acid chain: Chaperonin GroEL (545 aa).

ATP is bound by residues 30–33 (TLGP), K51, 87–91 (DGTTT), G415, 479–481 (NAA), and D495. The interval 526–545 (KDDAPAPAMPDMGGMGGMGM) is disordered.

It belongs to the chaperonin (HSP60) family. Forms a cylinder of 14 subunits composed of two heptameric rings stacked back-to-back. Interacts with the co-chaperonin GroES.

It localises to the cytoplasm. The catalysed reaction is ATP + H2O + a folded polypeptide = ADP + phosphate + an unfolded polypeptide.. Functionally, together with its co-chaperonin GroES, plays an essential role in assisting protein folding. The GroEL-GroES system forms a nano-cage that allows encapsulation of the non-native substrate proteins and provides a physical environment optimized to promote and accelerate protein folding. This Paracidovorax citrulli (strain AAC00-1) (Acidovorax citrulli) protein is Chaperonin GroEL.